We begin with the raw amino-acid sequence, 445 residues long: Ribosomal protein uS12 methylthiotransferase RimO (445 aa).

An MTTase N-terminal domain is found at 11–121; sequence PKISFVSLGC…VLDAVHRASP (111 aa). Residues cysteine 20, cysteine 56, cysteine 85, cysteine 152, cysteine 156, and cysteine 159 each contribute to the [4Fe-4S] cluster site. Residues 138–375 form the Radical SAM core domain; sequence LTPRHYAYLK…MARQQKISAR (238 aa). Residues 378–444 form the TRAM domain; the sequence is KRKVGTRQQI…EYDLHGTVAG (67 aa).

Belongs to the methylthiotransferase family. RimO subfamily. Requires [4Fe-4S] cluster as cofactor.

The protein resides in the cytoplasm. It catalyses the reaction L-aspartate(89)-[ribosomal protein uS12]-hydrogen + (sulfur carrier)-SH + AH2 + 2 S-adenosyl-L-methionine = 3-methylsulfanyl-L-aspartate(89)-[ribosomal protein uS12]-hydrogen + (sulfur carrier)-H + 5'-deoxyadenosine + L-methionine + A + S-adenosyl-L-homocysteine + 2 H(+). In terms of biological role, catalyzes the methylthiolation of an aspartic acid residue of ribosomal protein uS12. The protein is Ribosomal protein uS12 methylthiotransferase RimO of Bradyrhizobium sp. (strain ORS 278).